Here is a 317-residue protein sequence, read N- to C-terminus: 4-hydroxy-3-methylbut-2-enyl diphosphate reductase (317 aa).

Position 12 (Cys12) interacts with [4Fe-4S] cluster. His41 and His74 together coordinate (2E)-4-hydroxy-3-methylbut-2-enyl diphosphate. Dimethylallyl diphosphate is bound by residues His41 and His74. 2 residues coordinate isopentenyl diphosphate: His41 and His74. Position 96 (Cys96) interacts with [4Fe-4S] cluster. Residue His124 coordinates (2E)-4-hydroxy-3-methylbut-2-enyl diphosphate. A dimethylallyl diphosphate-binding site is contributed by His124. His124 lines the isopentenyl diphosphate pocket. The active-site Proton donor is the Glu126. Thr169 serves as a coordination point for (2E)-4-hydroxy-3-methylbut-2-enyl diphosphate. Cys199 contributes to the [4Fe-4S] cluster binding site. (2E)-4-hydroxy-3-methylbut-2-enyl diphosphate-binding residues include Ser227, Ser228, Asn229, and Ser271. Residues Ser227, Ser228, Asn229, and Ser271 each coordinate dimethylallyl diphosphate. 4 residues coordinate isopentenyl diphosphate: Ser227, Ser228, Asn229, and Ser271.

The protein belongs to the IspH family. [4Fe-4S] cluster is required as a cofactor.

It catalyses the reaction isopentenyl diphosphate + 2 oxidized [2Fe-2S]-[ferredoxin] + H2O = (2E)-4-hydroxy-3-methylbut-2-enyl diphosphate + 2 reduced [2Fe-2S]-[ferredoxin] + 2 H(+). It carries out the reaction dimethylallyl diphosphate + 2 oxidized [2Fe-2S]-[ferredoxin] + H2O = (2E)-4-hydroxy-3-methylbut-2-enyl diphosphate + 2 reduced [2Fe-2S]-[ferredoxin] + 2 H(+). Its pathway is isoprenoid biosynthesis; dimethylallyl diphosphate biosynthesis; dimethylallyl diphosphate from (2E)-4-hydroxy-3-methylbutenyl diphosphate: step 1/1. It functions in the pathway isoprenoid biosynthesis; isopentenyl diphosphate biosynthesis via DXP pathway; isopentenyl diphosphate from 1-deoxy-D-xylulose 5-phosphate: step 6/6. Catalyzes the conversion of 1-hydroxy-2-methyl-2-(E)-butenyl 4-diphosphate (HMBPP) into a mixture of isopentenyl diphosphate (IPP) and dimethylallyl diphosphate (DMAPP). Acts in the terminal step of the DOXP/MEP pathway for isoprenoid precursor biosynthesis. The chain is 4-hydroxy-3-methylbut-2-enyl diphosphate reductase from Vibrio parahaemolyticus serotype O3:K6 (strain RIMD 2210633).